The chain runs to 153 residues: MRLKVLWVGKTQEEWVRRGIDEYAGRIGRYMSIDLAEARDEKGAAVEAMREREGERLLKLLPKNARLVLLDERGEQMSSPELARFLATNRDGGTQELVFVIGGAYGFSDSLRAKAFKTISLSRMTFTHQMVRIFLLEQLYRGFTIINGEPYHH.

S-adenosyl-L-methionine contacts are provided by residues Leu-70, Gly-102, and 121 to 126 (LSRMTF).

The protein belongs to the RNA methyltransferase RlmH family. Homodimer.

It is found in the cytoplasm. It catalyses the reaction pseudouridine(1915) in 23S rRNA + S-adenosyl-L-methionine = N(3)-methylpseudouridine(1915) in 23S rRNA + S-adenosyl-L-homocysteine + H(+). In terms of biological role, specifically methylates the pseudouridine at position 1915 (m3Psi1915) in 23S rRNA. This Geotalea daltonii (strain DSM 22248 / JCM 15807 / FRC-32) (Geobacter daltonii) protein is Ribosomal RNA large subunit methyltransferase H.